A 322-amino-acid polypeptide reads, in one-letter code: Biotin synthase (322 aa).

The Radical SAM core domain occupies 39-266 (NQIQVSSLLN…KSVVRLSAGR (228 aa)). Residues Cys-54, Cys-58, and Cys-61 each coordinate [4Fe-4S] cluster. [2Fe-2S] cluster-binding residues include Cys-98, Cys-129, Cys-189, and Arg-261.

Belongs to the radical SAM superfamily. Biotin synthase family. In terms of assembly, homodimer. Requires [4Fe-4S] cluster as cofactor. The cofactor is [2Fe-2S] cluster.

The enzyme catalyses (4R,5S)-dethiobiotin + (sulfur carrier)-SH + 2 reduced [2Fe-2S]-[ferredoxin] + 2 S-adenosyl-L-methionine = (sulfur carrier)-H + biotin + 2 5'-deoxyadenosine + 2 L-methionine + 2 oxidized [2Fe-2S]-[ferredoxin]. It participates in cofactor biosynthesis; biotin biosynthesis; biotin from 7,8-diaminononanoate: step 2/2. Catalyzes the conversion of dethiobiotin (DTB) to biotin by the insertion of a sulfur atom into dethiobiotin via a radical-based mechanism. The polypeptide is Biotin synthase (Ruthia magnifica subsp. Calyptogena magnifica).